The following is a 346-amino-acid chain: E3 ubiquitin-protein ligase RNF146-A (346 aa).

The RING-type zinc finger occupies 37-75 (CAICLQTCVHPVSLPCKHVFCYLCVKGASWLGKRCALCR). Residues 91-167 (PELKAASRGN…EHGRRRKIKR (77 aa)) form the WWE domain. 2 disordered regions span residues 195–240 (SSAD…GTSL) and 256–301 (ERSH…ALVA). The span at 202–216 (SVPAQSGASVQSSSV) shows a compositional bias: low complexity. Positions 281–295 (SIEETESDASSDSED) are enriched in acidic residues.

Interacts with poly-ADP-ribosylated AXIN1, AXIN2, BLZF1 and CASC3. In terms of processing, ubiquitinated; autoubiquitinated. Autoubiquitination is enhanced upon poly(ADP-ribose)-binding.

It is found in the cytoplasm. The protein resides in the cytosol. It catalyses the reaction S-ubiquitinyl-[E2 ubiquitin-conjugating enzyme]-L-cysteine + [acceptor protein]-L-lysine = [E2 ubiquitin-conjugating enzyme]-L-cysteine + N(6)-ubiquitinyl-[acceptor protein]-L-lysine.. The protein operates within protein modification; protein ubiquitination. In terms of biological role, E3 ubiquitin-protein ligase that specifically binds poly-ADP-ribosylated proteins and mediates their ubiquitination and subsequent degradation. Acts as an activator of the Wnt signaling pathway by mediating the ubiquitination of poly-ADP-ribosylated AXIN1 and AXIN2, 2 key components of the beta-catenin destruction complex. Acts in cooperation with tankyrase proteins (TNKS and TNKS2), which mediate poly-ADP-ribosylation of target proteins AXIN1, AXIN2, BLZF1, CASC3, TNKS and TNKS2. Recognizes and binds tankyrase-dependent poly-ADP-ribosylated proteins via its WWE domain and mediates their ubiquitination. The protein is E3 ubiquitin-protein ligase RNF146-A (RNF146A) of Bos taurus (Bovine).